The chain runs to 200 residues: uncharacterized protein (200 aa).

This is an uncharacterized protein from Amazona oratrix (yellow-headed parrot).